A 969-amino-acid polypeptide reads, in one-letter code: Protein translocase subunit SecA (969 aa).

ATP contacts are provided by residues Q99, G117–T121, and D631.

The protein belongs to the SecA family. As to quaternary structure, monomer and homodimer. Part of the essential Sec protein translocation apparatus which comprises SecA, SecYEG and auxiliary proteins SecDF. Other proteins may also be involved.

The protein resides in the cell inner membrane. It localises to the cytoplasm. It carries out the reaction ATP + H2O + cellular proteinSide 1 = ADP + phosphate + cellular proteinSide 2.. Functionally, part of the Sec protein translocase complex. Interacts with the SecYEG preprotein conducting channel. Has a central role in coupling the hydrolysis of ATP to the transfer of proteins into and across the cell membrane, serving as an ATP-driven molecular motor driving the stepwise translocation of polypeptide chains across the membrane. The chain is Protein translocase subunit SecA from Chlamydia trachomatis serovar D (strain ATCC VR-885 / DSM 19411 / UW-3/Cx).